The sequence spans 550 residues: Membrane protein of ER body 2 (550 aa).

A disordered region spans residues E46–L199. Low complexity-rich tracts occupy residues S80–G105 and T112–N121. Residues W122–N132 show a composition bias toward polar residues. The stretch at E134–N165 forms a coiled coil. Acidic residues predominate over residues D143–N152. 2 stretches are compositionally biased toward basic and acidic residues: residues N153 to L166 and K185 to N198. 4 consecutive transmembrane segments (helical) span residues S374–A394, I425–F445, I458–V478, and S500–I520. Residues L393–R418 adopt a coiled-coil conformation.

Belongs to the CCC1 family. Interacts directly or indirectly with NAI2.

It is found in the endoplasmic reticulum membrane. In terms of biological role, may sequester excess cytosolic iron and manganese into endoplasmic reticulum to reduce metal ion toxicity. Not essential for the accumulation of ER body components, including PYK10. The protein is Membrane protein of ER body 2 (MEB2) of Arabidopsis thaliana (Mouse-ear cress).